The sequence spans 189 residues: Xanthine phosphoribosyltransferase (189 aa).

Residues L20 and N27 each contribute to the xanthine site. 5-phospho-alpha-D-ribose 1-diphosphate is bound at residue 128–132 (ANGEA). A xanthine-binding site is contributed by K156.

Belongs to the purine/pyrimidine phosphoribosyltransferase family. Xpt subfamily. In terms of assembly, homodimer.

It is found in the cytoplasm. The enzyme catalyses XMP + diphosphate = xanthine + 5-phospho-alpha-D-ribose 1-diphosphate. It participates in purine metabolism; XMP biosynthesis via salvage pathway; XMP from xanthine: step 1/1. Its function is as follows. Converts the preformed base xanthine, a product of nucleic acid breakdown, to xanthosine 5'-monophosphate (XMP), so it can be reused for RNA or DNA synthesis. This is Xanthine phosphoribosyltransferase from Clostridium acetobutylicum (strain ATCC 824 / DSM 792 / JCM 1419 / IAM 19013 / LMG 5710 / NBRC 13948 / NRRL B-527 / VKM B-1787 / 2291 / W).